We begin with the raw amino-acid sequence, 215 residues long: 16S rRNA (adenine(1408)-N(1))-methyltransferase (215 aa).

S-adenosyl-L-methionine contacts are provided by residues G32, D55, 87–88, 102–107, and 191–193; these read AE, LMPWGS, and TSW.

It belongs to the methyltransferase superfamily. Kanamycin-apramycin resistance family.

The enzyme catalyses adenosine(1408) in 16S rRNA + S-adenosyl-L-methionine = N(1)-methyladenosine(1408) in 16S rRNA + S-adenosyl-L-homocysteine + H(+). Functionally, specifically methylates the N(1) position of adenine 1408 in 16S rRNA. Confers resistance to various aminoglycosides. This is 16S rRNA (adenine(1408)-N(1))-methyltransferase (kamB) from Streptoalloteichus hindustanus.